The sequence spans 638 residues: LIM domain kinase 2 (638 aa).

LIM zinc-binding domains lie at 12-63 and 72-124; these read CRGC…CHKD and CHGC…CGKC. The PDZ domain occupies 152–239; it reads LISMPATTEC…TLQLLIEHDP (88 aa). Phosphothreonine is present on Thr210. Residues 255–304 form a disordered region; the sequence is PHMQSTGHTLMLSTLDTKENQEGTLRRRSLRRSNSISKSPGPSSPKEPLL. Residues 257 to 269 show a composition bias toward polar residues; sequence MQSTGHTLMLSTL. A compositionally biased stretch (basic and acidic residues) spans 270 to 279; it reads DTKENQEGTL. Over residues 286 to 304 the composition is skewed to low complexity; sequence RSNSISKSPGPSSPKEPLL. Ser293 and Ser298 each carry phosphoserine. The Protein kinase domain occupies 331-608; that stretch reads LIHGEVLGKG…DSFEALSLFL (278 aa). ATP is bound by residues 337–345 and Lys360; that span reads LGKGFFGQA. Residue Asp451 is part of the active site. Thr505 is subject to Phosphothreonine; by ROCK1 and CDC42BP.

This sequence belongs to the protein kinase superfamily. TKL Ser/Thr protein kinase family. Binds ROCK1 and MARF1. Interacts with NISCH. Post-translationally, phosphorylated on serine and/or threonine residues by ROCK1. In terms of tissue distribution, specifically expressed in the testes.

It localises to the cytoplasm. The protein resides in the cytoskeleton. The protein localises to the spindle. Its subcellular location is the microtubule organizing center. It is found in the centrosome. It localises to the nucleus. The protein resides in the perinuclear region. It carries out the reaction L-seryl-[protein] + ATP = O-phospho-L-seryl-[protein] + ADP + H(+). It catalyses the reaction L-threonyl-[protein] + ATP = O-phospho-L-threonyl-[protein] + ADP + H(+). In terms of biological role, serine/threonine-protein kinase that plays an essential role in the regulation of actin filament dynamics. Acts downstream of several Rho family GTPase signal transduction pathways. Involved in astral microtubule organization and mitotic spindle orientation during early stages of mitosis by mediating phosphorylation of TPPP. Displays serine/threonine-specific phosphorylation of myelin basic protein and histone (MBP) in vitro. Suppresses ciliogenesis via multiple pathways; phosphorylation of CFL1, suppression of directional trafficking of ciliary vesicles to the ciliary base, and by facilitating YAP1 nuclear localization where it acts as a transcriptional corepressor of the TEAD4 target genes AURKA and PLK1. In Mus musculus (Mouse), this protein is LIM domain kinase 2 (Limk2).